The chain runs to 415 residues: Lipid-A-disaccharide synthase (415 aa).

The interval 1-21 (MNSLPESGSDGQSSADPSQKA) is disordered.

Belongs to the LpxB family.

It carries out the reaction a lipid X + a UDP-2-N,3-O-bis[(3R)-3-hydroxyacyl]-alpha-D-glucosamine = a lipid A disaccharide + UDP + H(+). It participates in bacterial outer membrane biogenesis; LPS lipid A biosynthesis. Its function is as follows. Condensation of UDP-2,3-diacylglucosamine and 2,3-diacylglucosamine-1-phosphate to form lipid A disaccharide, a precursor of lipid A, a phosphorylated glycolipid that anchors the lipopolysaccharide to the outer membrane of the cell. The protein is Lipid-A-disaccharide synthase of Gluconobacter oxydans (strain 621H) (Gluconobacter suboxydans).